The sequence spans 291 residues: 33 kDa chaperonin (291 aa).

2 cysteine pairs are disulfide-bonded: Cys-236–Cys-238 and Cys-269–Cys-272.

It belongs to the HSP33 family. Under oxidizing conditions two disulfide bonds are formed involving the reactive cysteines. Under reducing conditions zinc is bound to the reactive cysteines and the protein is inactive.

It is found in the cytoplasm. Functionally, redox regulated molecular chaperone. Protects both thermally unfolding and oxidatively damaged proteins from irreversible aggregation. Plays an important role in the bacterial defense system toward oxidative stress. This Lactobacillus johnsonii (strain CNCM I-12250 / La1 / NCC 533) protein is 33 kDa chaperonin.